We begin with the raw amino-acid sequence, 254 residues long: Type III pantothenate kinase (254 aa).

6–13 (DVGNTNIV) is an ATP binding site. Substrate contacts are provided by residues Phe-100 and 107 to 110 (GADR). Asp-109 functions as the Proton acceptor in the catalytic mechanism. K(+) is bound at residue Asp-129. Thr-132 lines the ATP pocket. Thr-184 contributes to the substrate binding site.

This sequence belongs to the type III pantothenate kinase family. As to quaternary structure, homodimer. Requires NH4(+) as cofactor. The cofactor is K(+).

It localises to the cytoplasm. The enzyme catalyses (R)-pantothenate + ATP = (R)-4'-phosphopantothenate + ADP + H(+). It participates in cofactor biosynthesis; coenzyme A biosynthesis; CoA from (R)-pantothenate: step 1/5. In terms of biological role, catalyzes the phosphorylation of pantothenate (Pan), the first step in CoA biosynthesis. The chain is Type III pantothenate kinase from Moorella thermoacetica (strain ATCC 39073 / JCM 9320).